A 509-amino-acid chain; its full sequence is MEPYVLLDPRQKALYRDVMQESYETLMSIAQGLVNHKAAEEDAVGLKEDAVGSEEPQTHPPHNPAQNRTAGSHRRKAKRPDKAAPLGVAQTPPAAPTPKRDGVKPSRVRDRPFGCPDCGKSFPWASHLERHRRVHTGERPYSCPECGESYSQSSHLVQHRRTHGGDRPHKCQHCGKPFAGAAQLLAHSRGHAADRPHRCGDCGKGFVWASHLERHRRVHTGEKPYECPECGEAFSQGSHLTKHRRSHARSGRTAAPLRKCFGQSSDLVQHRSRAGKKPQRCAECGKAFRAAPPLRRHRRERSHRCGDCGKGFAWASHLQRHRRVHTGERPFPCGLCGERFSQKAHLLQHGKTHRPERPYKCGDCGKRFENAPPFLAHRRGHAALKSFTCGDCGKGFAWASHLQRHRRVHTGEKPYECPECGEAFSQGSHLTKHRRSHGPKAPLLPVQGRGEAGEPLRASPLSSGAEQRDGRRAQRGGVEEEVGWGANRAVLRGRSAHSWPRSHLPMLGC.

Residues 1–61 enclose the KRAB domain; that stretch reads MEPYVLLDPR…GSEEPQTHPP (61 aa). Basic and acidic residues-rich tracts occupy residues 41 to 50 and 98 to 112; these read EDAVGLKEDA and PKRD…RDRP. Positions 41–114 are disordered; the sequence is EDAVGLKEDA…PSRVRDRPFG (74 aa). 11 consecutive C2H2-type zinc fingers follow at residues 113-135, 141-163, 169-191, 197-219, 225-247, 279-303, 303-325, 331-353, 359-383, 387-409, and 415-437; these read FGCP…RRVH, YSCP…RRTH, HKCQ…SRGH, HRCG…RRVH, YECP…RRSH, QRCA…ERSH, FPCG…GKTH, YKCG…GHAA, and FTCG…RRVH. A disordered region spans residues 428 to 479; that stretch reads SHLTKHRRSHGPKAPLLPVQGRGEAGEPLRASPLSSGAEQRDGRRAQRGGVE.

This sequence belongs to the krueppel C2H2-type zinc-finger protein family.

It localises to the nucleus. The protein is Zinc finger protein CKR1 of Gallus gallus (Chicken).